A 903-amino-acid chain; its full sequence is Probable leucine--tRNA ligase, mitochondrial (903 aa).

Residue Lys68 is modified to N6-acetyllysine. The 'HIGH' region motif lies at 92–102 (YPSGKLHMGHV). Residue Lys236 is modified to N6-acetyllysine. Positions 639 to 643 (KMSKS) match the 'KMSKS' region motif. Lys642 serves as a coordination point for ATP. At Ser711 the chain carries Phosphoserine.

Belongs to the class-I aminoacyl-tRNA synthetase family.

The protein resides in the mitochondrion matrix. The catalysed reaction is tRNA(Leu) + L-leucine + ATP = L-leucyl-tRNA(Leu) + AMP + diphosphate. This Pongo abelii (Sumatran orangutan) protein is Probable leucine--tRNA ligase, mitochondrial (LARS2).